The chain runs to 880 residues: Valine--tRNA ligase (880 aa).

The short motif at 48–58 is the 'HIGH' region element; sequence PNITGKLHLGH. Positions 527–531 match the 'KMSKS' region motif; that stretch reads KMSKS. An ATP-binding site is contributed by Lys530. 2 coiled-coil regions span residues 717 to 741 and 810 to 880; these read KEEL…AIRN and LFDL…KSLK.

The protein belongs to the class-I aminoacyl-tRNA synthetase family. ValS type 1 subfamily. In terms of assembly, monomer.

The protein resides in the cytoplasm. The catalysed reaction is tRNA(Val) + L-valine + ATP = L-valyl-tRNA(Val) + AMP + diphosphate. Functionally, catalyzes the attachment of valine to tRNA(Val). As ValRS can inadvertently accommodate and process structurally similar amino acids such as threonine, to avoid such errors, it has a 'posttransfer' editing activity that hydrolyzes mischarged Thr-tRNA(Val) in a tRNA-dependent manner. The protein is Valine--tRNA ligase of Clostridium tetani (strain Massachusetts / E88).